We begin with the raw amino-acid sequence, 126 residues long: Aspartate 1-decarboxylase (126 aa).

Catalysis depends on Ser25, which acts as the Schiff-base intermediate with substrate; via pyruvic acid. Ser25 carries the post-translational modification Pyruvic acid (Ser). Residue Thr57 coordinates substrate. Tyr58 functions as the Proton donor in the catalytic mechanism. Gly73–Ala75 provides a ligand contact to substrate.

It belongs to the PanD family. In terms of assembly, heterooctamer of four alpha and four beta subunits. It depends on pyruvate as a cofactor. In terms of processing, is synthesized initially as an inactive proenzyme, which is activated by self-cleavage at a specific serine bond to produce a beta-subunit with a hydroxyl group at its C-terminus and an alpha-subunit with a pyruvoyl group at its N-terminus.

Its subcellular location is the cytoplasm. It carries out the reaction L-aspartate + H(+) = beta-alanine + CO2. It functions in the pathway cofactor biosynthesis; (R)-pantothenate biosynthesis; beta-alanine from L-aspartate: step 1/1. Its function is as follows. Catalyzes the pyruvoyl-dependent decarboxylation of aspartate to produce beta-alanine. The polypeptide is Aspartate 1-decarboxylase (Methylobacillus flagellatus (strain ATCC 51484 / DSM 6875 / VKM B-1610 / KT)).